The primary structure comprises 299 residues: MLQLFYFSAIIASVILNFVGIIMNLFIMVVNCKTWVKSHRISSSDRILFSLGITRFLMLGLFLVNTIFFVSSNTERSVYLSAFFVLCFMFXDSSSLWFVTLLNILYCVKITNFQHSVFLLLKQNISPKIPRLLLACVLISAFTTCLYITLSQASPFPELVTKRNNTSFNTHEGILSLVVSLVLSSSLQFIINVTSASLLIHSLRRHIQKMQKNATGFWNPQTEAHVGAMKLMIYFLILYIPYSVATLVQYLPFYVGMDMGTKAICLIFATLYSPGHSVLIIITHPKLKTTAKKILCFKK.

Topologically, residues 1-9 (MLQLFYFSA) are extracellular. Residues 10-30 (IIASVILNFVGIIMNLFIMVV) traverse the membrane as a helical segment. Over 31 to 46 (NCKTWVKSHRISSSDR) the chain is Cytoplasmic. Residues 47–67 (ILFSLGITRFLMLGLFLVNTI) traverse the membrane as a helical segment. Over 68 to 81 (FFVSSNTERSVYLS) the chain is Extracellular. Residues 82 to 102 (AFFVLCFMFXDSSSLWFVTLL) form a helical membrane-spanning segment. Topologically, residues 103-131 (NILYCVKITNFQHSVFLLLKQNISPKIPR) are cytoplasmic. Residues 132–152 (LLLACVLISAFTTCLYITLSQ) form a helical membrane-spanning segment. Residues 153-172 (ASPFPELVTKRNNTSFNTHE) lie on the Extracellular side of the membrane. N-linked (GlcNAc...) asparagine glycosylation is found at asparagine 164 and asparagine 165. A helical transmembrane segment spans residues 173–193 (GILSLVVSLVLSSSLQFIINV). The Cytoplasmic segment spans residues 194–230 (TSASLLIHSLRRHIQKMQKNATGFWNPQTEAHVGAMK). Residues 231-251 (LMIYFLILYIPYSVATLVQYL) traverse the membrane as a helical segment. Topologically, residues 252 to 262 (PFYVGMDMGTK) are extracellular. Residues 263 to 283 (AICLIFATLYSPGHSVLIIIT) traverse the membrane as a helical segment. The Cytoplasmic portion of the chain corresponds to 284-299 (HPKLKTTAKKILCFKK).

This sequence belongs to the G-protein coupled receptor T2R family.

The protein resides in the membrane. Its subcellular location is the cell projection. It localises to the cilium membrane. Its function is as follows. Gustducin-coupled receptor implicated in the perception of bitter compounds in the oral cavity and the gastrointestinal tract. Signals through PLCB2 and the calcium-regulated cation channel TRPM5. In airway epithelial cells, binding of denatonium increases the intracellular calcium ion concentration and stimulates ciliary beat frequency. The polypeptide is Taste receptor type 2 member 4 (TAS2R4) (Pongo pygmaeus (Bornean orangutan)).